The primary structure comprises 106 residues: MVKIRIKTGDKVQVITGKDKGKRGIVIKVLASLSRVIVKGINLARKHVKANKNDVSGGIINKELPIHISNVAYVDSSSNLITKITYTKLDDKRKVRVSKRSGEILQ.

The protein belongs to the universal ribosomal protein uL24 family. In terms of assembly, part of the 50S ribosomal subunit.

Functionally, one of two assembly initiator proteins, it binds directly to the 5'-end of the 23S rRNA, where it nucleates assembly of the 50S subunit. One of the proteins that surrounds the polypeptide exit tunnel on the outside of the subunit. In Orientia tsutsugamushi (strain Boryong) (Rickettsia tsutsugamushi), this protein is Large ribosomal subunit protein uL24.